Consider the following 969-residue polypeptide: Manganese resistance protein MNR2 (969 aa).

Residues 1 to 11 (MSTDNSQKDEG) are compositionally biased toward basic and acidic residues. 4 disordered regions span residues 1–49 (MSTD…SRRP), 96–153 (GAFI…DLSP), 167–186 (HKSFVDENSPTDRRQSNANN), and 199–256 (VNNN…NNSS). Topologically, residues 1 to 912 (MSTDNSQKDE…DMNDVLGKIT (912 aa)) are cytoplasmic. Low complexity predominate over residues 13-23 (PLLSPYSSSPQ). A compositionally biased stretch (basic residues) spans 24 to 36 (LRKKKRNQKRRKD). The segment covering 37–48 (KFVGHLKSDSRR) has biased composition (basic and acidic residues). S114 carries the phosphoserine modification. The segment covering 141-152 (SDQNRSLVSDLS) has biased composition (polar residues). S175 is modified (phosphoserine). T177 carries the post-translational modification Phosphothreonine. S182 bears the Phosphoserine mark. Composition is skewed to low complexity over residues 225–234 (NKNSKSTSSD) and 244–256 (SRPSSSLSSNNSS). Residue S383 is modified to Phosphoserine. Disordered stretches follow at residues 559–662 (VRRR…KPRE) and 746–769 (QSDDSSDSDSSDSDSDSGASDEDA). Over residues 565-578 (EKQESATLDHESIS) the composition is skewed to basic and acidic residues. Phosphothreonine is present on T571. 2 positions are modified to phosphoserine: S576 and S582. Composition is skewed to low complexity over residues 590–607 (SNESNANNNNSTSNASRS) and 622–632 (ANRTTNTSSSS). Over residues 749 to 769 (DSSDSDSSDSDSDSGASDEDA) the composition is skewed to acidic residues. A helical membrane pass occupies residues 913–933 (ILGTIVLPMNVITGLWGMNVI). Over 934 to 941 (VPGQYRDS) the chain is Extracellular. A helical membrane pass occupies residues 942 to 962 (LTWFIGIVLFMCMLACSAYMY). Residues 963-969 (TKRRFGF) are Cytoplasmic-facing.

The protein belongs to the CorA metal ion transporter (MIT) (TC 1.A.35) family.

It localises to the membrane. The chain is Manganese resistance protein MNR2 (MNR2) from Saccharomyces cerevisiae (strain ATCC 204508 / S288c) (Baker's yeast).